The chain runs to 442 residues: tRNA modification GTPase MnmE (442 aa).

(6S)-5-formyl-5,6,7,8-tetrahydrofolate-binding residues include arginine 24, glutamate 82, and lysine 120. A TrmE-type G domain is found at glycine 217–glutamate 367. GTP contacts are provided by residues asparagine 227 to threonine 232, serine 246 to threonine 252, and aspartate 271 to glycine 274. Serine 231 and threonine 252 together coordinate Mg(2+). Lysine 442 contacts (6S)-5-formyl-5,6,7,8-tetrahydrofolate.

The protein belongs to the TRAFAC class TrmE-Era-EngA-EngB-Septin-like GTPase superfamily. TrmE GTPase family. In terms of assembly, homodimer. Heterotetramer of two MnmE and two MnmG subunits. The cofactor is K(+).

The protein resides in the cytoplasm. Exhibits a very high intrinsic GTPase hydrolysis rate. Involved in the addition of a carboxymethylaminomethyl (cmnm) group at the wobble position (U34) of certain tRNAs, forming tRNA-cmnm(5)s(2)U34. The polypeptide is tRNA modification GTPase MnmE (Wolbachia sp. subsp. Drosophila simulans (strain wRi)).